Here is a 202-residue protein sequence, read N- to C-terminus: Pyridoxal 5'-phosphate synthase subunit PdxT (202 aa).

52 to 54 (GES) is an L-glutamine binding site. The active-site Nucleophile is the Cys84. L-glutamine is bound by residues Arg120 and 148–149 (IR). Active-site charge relay system residues include His185 and Glu187.

This sequence belongs to the glutaminase PdxT/SNO family. In terms of assembly, in the presence of PdxS, forms a dodecamer of heterodimers. Only shows activity in the heterodimer.

It catalyses the reaction aldehydo-D-ribose 5-phosphate + D-glyceraldehyde 3-phosphate + L-glutamine = pyridoxal 5'-phosphate + L-glutamate + phosphate + 3 H2O + H(+). The catalysed reaction is L-glutamine + H2O = L-glutamate + NH4(+). It participates in cofactor biosynthesis; pyridoxal 5'-phosphate biosynthesis. Its function is as follows. Catalyzes the hydrolysis of glutamine to glutamate and ammonia as part of the biosynthesis of pyridoxal 5'-phosphate. The resulting ammonia molecule is channeled to the active site of PdxS. The polypeptide is Pyridoxal 5'-phosphate synthase subunit PdxT (Methanopyrus kandleri (strain AV19 / DSM 6324 / JCM 9639 / NBRC 100938)).